The chain runs to 261 residues: Syntaxin-7 (261 aa).

Ser2 carries the post-translational modification N-acetylserine. At 2–238 (SYTPGIGGDS…DYQRKSRKTL (237 aa)) the chain is on the cytoplasmic side. The residue at position 4 (Thr4) is a Phosphothreonine. Phosphoserine is present on Ser45. Residues 47–68 (ELRQLLQQKQQYTNQLAKETDK) are a coiled coil. At Ser75 the chain carries Phosphoserine. A Phosphothreonine modification is found at Thr79. 4 positions are modified to phosphoserine: Ser125, Ser126, Ser129, and Ser205. The tract at residues 128-148 (VSGGFPEDSSKEKNLVSWESQ) is disordered. A t-SNARE coiled-coil homology domain is found at 165–227 (LRLIHERESS…QQANQQLSRA (63 aa)). A helical; Anchor for type IV membrane protein transmembrane segment spans residues 239-259 (CIIIFILVVRIVIICLIVWGL). Topologically, residues 260–261 (KG) are vesicular.

This sequence belongs to the syntaxin family. Interacts with VPS11, VPS16 and VPS18. Interacts with VPS33A. Forms a SNARE complex with VTI1B, STX8 and VAMP8 which functions in the homotypic fusion of late endosomes. Component of the SNARE complex composed of STX7, STX8, VAMP7 and VTI1B that is required for heterotypic fusion of late endosomes with lysosomes. Interacts with TPC1.

Its subcellular location is the early endosome membrane. Its function is as follows. May be involved in protein trafficking from the plasma membrane to the early endosome (EE) as well as in homotypic fusion of endocytic organelles. Mediates the endocytic trafficking from early endosomes to late endosomes and lysosomes. In Mus musculus (Mouse), this protein is Syntaxin-7 (Stx7).